Consider the following 274-residue polypeptide: Putative phosphoenolpyruvate synthase regulatory protein (274 aa).

154-161 is an ADP binding site; sequence AVSRSGKT.

The protein belongs to the pyruvate, phosphate/water dikinase regulatory protein family. PSRP subfamily.

It carries out the reaction [pyruvate, water dikinase] + ADP = [pyruvate, water dikinase]-phosphate + AMP + H(+). It catalyses the reaction [pyruvate, water dikinase]-phosphate + phosphate + H(+) = [pyruvate, water dikinase] + diphosphate. Its function is as follows. Bifunctional serine/threonine kinase and phosphorylase involved in the regulation of the phosphoenolpyruvate synthase (PEPS) by catalyzing its phosphorylation/dephosphorylation. This is Putative phosphoenolpyruvate synthase regulatory protein from Alkalilimnicola ehrlichii (strain ATCC BAA-1101 / DSM 17681 / MLHE-1).